The chain runs to 666 residues: Fructose-1,6-bisphosphatase class 3 (666 aa).

Belongs to the FBPase class 3 family. Mn(2+) is required as a cofactor.

It carries out the reaction beta-D-fructose 1,6-bisphosphate + H2O = beta-D-fructose 6-phosphate + phosphate. The protein operates within carbohydrate biosynthesis; gluconeogenesis. The sequence is that of Fructose-1,6-bisphosphatase class 3 from Phocaeicola vulgatus (strain ATCC 8482 / DSM 1447 / JCM 5826 / CCUG 4940 / NBRC 14291 / NCTC 11154) (Bacteroides vulgatus).